Reading from the N-terminus, the 420-residue chain is 2',3'-cyclic-nucleotide 3'-phosphodiesterase (420 aa).

Ser9 is modified (phosphoserine). Tyr110 is modified (phosphotyrosine). Residues Ser169, Ser227, and Ser239 each carry the phosphoserine modification. His250 functions as the Proton acceptor in the catalytic mechanism. Position 252 (Thr252) interacts with substrate. His329 serves as the catalytic Proton donor. Residue Thr331 coordinates substrate. Ser358 is modified (phosphoserine). Cysteine methyl ester is present on Cys417. Cys417 is lipidated: S-farnesyl cysteine. A propeptide spans Thr418–Ile420 (removed in mature form).

The protein belongs to the 2H phosphoesterase superfamily. CNPase family. Exists as monomers and homodimers.

The protein resides in the membrane. It localises to the melanosome. It carries out the reaction a nucleoside 2',3'-cyclic phosphate + H2O = a nucleoside 2'-phosphate + H(+). Its function is as follows. Catalyzes the formation of 2'-nucleotide products from 2',3'-cyclic substrates. May participate in RNA metabolism in the myelinating cell, CNP is the third most abundant protein in central nervous system myelin. The chain is 2',3'-cyclic-nucleotide 3'-phosphodiesterase from Mus musculus (Mouse).